The primary structure comprises 509 residues: MEEIQRYLQPDRSQQHNFLYPLIFQEYIYALAHDHGLNRNRSVLLENPGYNNKFSLLIVKRLITRMYQQNHFLISTNDSNKNAFLGCNKSLYSQMISEGFAFIVEIPFSLRLISSLSSFEGKKIFKSHNLRSIHSTFPFLEDNFSHLNYVLDILIPYPVHLEILVQTLRYWVKDASSLHLLRFFLHEYWNLNSLITSKKPGYSFSKKNQRFFFFLYNSYVYECESTFVFLRNQSSRLRSTSFGALLERINFYGKMERLVEVFTKDFQVTLWLFKDPFMHYVRYQEKSILASKGTFLLMNKWKFYLVNFWQCHFSLCFHTGRIHINQLSNHSRDFMGYLSSVRLNPSMLRSQMLENSFLINNAIKKFDTLVPIIPLIGSLAKANFCTVLGHPISKPVWSDLSDSDIIDRFGRICRNLFHYYSGSSKKXTLYRIKYILRLSCARTLARKHKSTVRTFLKRSGSELLEEFLTSEEQVLSLTFPRASSSLWGVYRSRIWYLDIFCINXLANYQ.

The protein belongs to the intron maturase 2 family. MatK subfamily.

It localises to the plastid. The protein resides in the chloroplast. In terms of biological role, usually encoded in the trnK tRNA gene intron. Probably assists in splicing its own and other chloroplast group II introns. This is Maturase K from Nicotiana rustica (Aztec tobacco).